A 380-amino-acid chain; its full sequence is Glucose-1-phosphate adenylyltransferase (380 aa).

Alpha-D-glucose 1-phosphate contacts are provided by residues Gly-164, 179 to 180 (EK), and Ser-190.

Belongs to the bacterial/plant glucose-1-phosphate adenylyltransferase family. As to quaternary structure, homotetramer.

It catalyses the reaction alpha-D-glucose 1-phosphate + ATP + H(+) = ADP-alpha-D-glucose + diphosphate. It functions in the pathway glycan biosynthesis; glycogen biosynthesis. Involved in the biosynthesis of ADP-glucose, a building block required for the elongation reactions to produce glycogen. Catalyzes the reaction between ATP and alpha-D-glucose 1-phosphate (G1P) to produce pyrophosphate and ADP-Glc. The polypeptide is Glucose-1-phosphate adenylyltransferase (Lactococcus lactis subsp. cremoris (strain MG1363)).